A 199-amino-acid polypeptide reads, in one-letter code: Prolactin-2 (199 aa).

Disulfide bonds link cysteine 4-cysteine 11, cysteine 58-cysteine 174, and cysteine 191-cysteine 199.

Belongs to the somatotropin/prolactin family.

The protein localises to the secreted. The polypeptide is Prolactin-2 (Crocodylus novaeguineae (Crocodile)).